The chain runs to 570 residues: Hemagglutinin-neuraminidase (570 aa).

The Intravirion portion of the chain corresponds to M1–R26. Residues I27–M48 form a helical membrane-spanning segment. The Virion surface portion of the chain corresponds to E49–V570. Residue N119 is glycosylated (N-linked (GlcNAc...) asparagine; by host). Residues G124–Y152 form an important for interaction with fusion/F protein region. Intrachain disulfides connect C172–C195, C185–C246, and C237–C250. The interval N233–S238 is involved in neuraminidase activity. N340 and N432 each carry an N-linked (GlcNAc...) asparagine; by host glycan. 2 disulfides stabilise this stretch: C343-C460 and C454-C464. Residues N480, N507, and N537 are each glycosylated (N-linked (GlcNAc...) asparagine; by host). An intrachain disulfide couples C530 to C541.

Belongs to the paramyxoviruses hemagglutinin-neuraminidase family. Homotetramer; composed of disulfide-linked homodimers. Interacts with F protein trimer. Interacts with host CG-1B; this interaction inhibits viral adsorption and replication rather than internalization.

The protein resides in the virion membrane. It is found in the host cell membrane. The enzyme catalyses Hydrolysis of alpha-(2-&gt;3)-, alpha-(2-&gt;6)-, alpha-(2-&gt;8)- glycosidic linkages of terminal sialic acid residues in oligosaccharides, glycoproteins, glycolipids, colominic acid and synthetic substrates.. Its function is as follows. Mediates the viral entry into the host cell together with fusion/F protein. Attaches the virus to sialic acid-containing cell receptors and thereby initiates infection. Binding of HN protein to the receptor induces a conformational change that allows the F protein to trigger virion/cell membranes fusion. Functionally, neuraminidase activity ensures the efficient spread of the virus by dissociating the mature virions from the neuraminic acid containing glycoproteins. The protein is Hemagglutinin-neuraminidase (HN) of Gallus gallus (Chicken).